A 543-amino-acid polypeptide reads, in one-letter code: Tyrosine-protein kinase Yes (543 aa).

Over residues 1 to 20 (MGCIKSKENKSPAIKYRPEN) the composition is skewed to basic and acidic residues. The disordered stretch occupies residues 1–45 (MGCIKSKENKSPAIKYRPENTPEPVSTSVSHYGAEPTTVSPCPSS). The N-myristoyl glycine moiety is linked to residue Gly-2. Cys-3 carries S-palmitoyl cysteine; in membrane form lipidation. Thr-21 bears the Phosphothreonine mark. Tyr-32 bears the Phosphotyrosine mark. At Ser-40 the chain carries Phosphoserine. Residues 91–152 (GGVTIFVALY…PSNYVAPADS (62 aa)) enclose the SH3 domain. An SH2 domain is found at 158-255 (WYFGKMGRKD…GLCHKLTTVC (98 aa)). The region spanning 277-530 (LRLEVKLGQG…YIQSFLEDYF (254 aa)) is the Protein kinase domain. Residues 283-291 (LGQGCFGEV) and Lys-305 each bind ATP. Residues Tyr-336 and Tyr-345 each carry the phosphotyrosine modification. The active-site Proton acceptor is Asp-396. Phosphotyrosine; by autocatalysis is present on Tyr-426. The residue at position 446 (Tyr-446) is a Phosphotyrosine. Tyr-537 bears the Phosphotyrosine; by CSK mark.

The protein belongs to the protein kinase superfamily. Tyr protein kinase family. SRC subfamily. In terms of assembly, interacts with YAP1 and CSF1R. Interacts with CTNND1; this interaction allows YES1-mediated activation of FYN and FER and subsequent phosphorylation of CTNND1. Interacts with FASLG. Interacts with IL6ST/gp130. Interacts with SCRIB, when YES1 is in a closed conformation; the interaction facilitates YES1 autophosphorylation. Post-translationally, phosphorylated. Phosphorylation by CSK on the C-terminal tail maintains the enzyme in an inactive state. Autophosphorylation at Tyr-426 maintains enzyme activity by blocking CSK-mediated inhibition. In terms of processing, palmitoylation at Cys-3 promotes membrane localization. Expressed in the epithelial cells of renal proximal tubules and stomach as well as hematopoietic cells in the bone marrow and spleen in the fetal tissues. In adult, expressed in epithelial cells of the renal proximal tubules and present in keratinocytes in the basal epidermal layer of epidermis.

Its subcellular location is the cell membrane. The protein resides in the cytoplasm. It localises to the cytoskeleton. It is found in the microtubule organizing center. The protein localises to the centrosome. Its subcellular location is the cytosol. The protein resides in the cell junction. It catalyses the reaction L-tyrosyl-[protein] + ATP = O-phospho-L-tyrosyl-[protein] + ADP + H(+). Non-receptor protein tyrosine kinase that is involved in the regulation of cell growth and survival, apoptosis, cell-cell adhesion, cytoskeleton remodeling, and differentiation. Stimulation by receptor tyrosine kinases (RTKs) including EGFR, PDGFR, CSF1R and FGFR leads to recruitment of YES1 to the phosphorylated receptor, and activation and phosphorylation of downstream substrates. Upon EGFR activation, promotes the phosphorylation of PARD3 to favor epithelial tight junction assembly. Participates in the phosphorylation of specific junctional components such as CTNND1 by stimulating the FYN and FER tyrosine kinases at cell-cell contacts. Upon T-cell stimulation by CXCL12, phosphorylates collapsin response mediator protein 2/DPYSL2 and induces T-cell migration. Participates in CD95L/FASLG signaling pathway and mediates AKT-mediated cell migration. Plays a role in cell cycle progression by phosphorylating the cyclin-dependent kinase 4/CDK4 thus regulating the G1 phase. Also involved in G2/M progression and cytokinesis. Catalyzes phosphorylation of organic cation transporter OCT2 which induces its transport activity. The sequence is that of Tyrosine-protein kinase Yes (YES1) from Homo sapiens (Human).